Reading from the N-terminus, the 118-residue chain is MSGGSSCSQTPSRAIPTTRRVVLADGVQLPPGDYSTTPGGTLFSTTPGGTRIIYDRKFLMECRNSPVTKTPPRDLPTIPGVTSPTGDEPPTEARQNHLRSSPEDKPAGGEESQFEMDI.

Ser2 bears the N-acetylserine mark. Residues 27-48 (VQLPPGDYSTTPGGTLFSTTPG) are disordered. A compositionally biased stretch (polar residues) spans 34–48 (YSTTPGGTLFSTTPG). At Thr37 the chain carries Phosphothreonine; by MTOR. Thr41 is modified (phosphothreonine). At Ser44 the chain carries Phosphoserine. Phosphothreonine; by MTOR is present on Thr46. Residue Thr50 is modified to Phosphothreonine. Tyr54 bears the Phosphotyrosine mark. The short motif at 54-60 (YDRKFLM) is the YXXXXLphi motif element. A Glycyl lysine isopeptide (Lys-Gly) (interchain with G-Cter in ubiquitin) cross-link involves residue Lys57. The interval 64-118 (NSPVTKTPPRDLPTIPGVTSPTGDEPPTEARQNHLRSSPEDKPAGGEESQFEMDI) is disordered. Ser65 is modified (phosphoserine; by DYRK2, MAPK1, MAPK3 and MTOR). Residue Thr70 is modified to Phosphothreonine; by MTOR. Thr77 is subject to Phosphothreonine. Ser83 and Ser100 each carry phosphoserine. Phosphoserine; by DYRK2 is present on Ser101. The residue at position 112 (Ser112) is a Phosphoserine. Residues 114–118 (FEMDI) carry the TOS motif motif.

This sequence belongs to the eIF4E-binding protein family. In terms of assembly, hypophosphorylated EIF4EBP1 competes with EIF4G1/EIF4G3 to interact with EIF4E; insulin stimulated MAP-kinase (MAPK1 and MAPK3) or mTORC1 phosphorylation of EIF4EBP1 causes dissociation of the complex allowing EIF4G1/EIF4G3 to bind and consequent initiation of translation. Interacts (via TOS motif) with RPTOR; promoting phosphorylation by mTORC1. In terms of processing, phosphorylated on serine and threonine residues in response to insulin, EGF and PDGF. Phosphorylation at Thr-37, Thr-46, Ser-65 and Thr-70, corresponding to the hyperphosphorylated form, is regulated by mTORC1 and abolishes binding to EIF4E. Ubiquitinated: when eIF4E levels are low, hypophosphorylated form is ubiquitinated by the BCR(KLHL25) complex, leading to its degradation and serving as a homeostatic mechanism to maintain translation and prevent eIF4E inhibition when eIF4E levels are low. Not ubiquitinated when hyperphosphorylated (at Thr-37, Thr-46, Ser-65 and Thr-70) or associated with eIF4E.

The protein resides in the cytoplasm. It localises to the nucleus. Its function is as follows. Repressor of translation initiation that regulates EIF4E activity by preventing its assembly into the eIF4F complex: hypophosphorylated form competes with EIF4G1/EIF4G3 and strongly binds to EIF4E, leading to repress translation. In contrast, hyperphosphorylated form dissociates from EIF4E, allowing interaction between EIF4G1/EIF4G3 and EIF4E, leading to initiation of translation. Mediates the regulation of protein translation by hormones, growth factors and other stimuli that signal through the MAP kinase and mTORC1 pathways. This is Eukaryotic translation initiation factor 4E-binding protein 1 (EIF4EBP1) from Bos taurus (Bovine).